The primary structure comprises 244 residues: Ribosomal RNA small subunit methyltransferase NEP1 (244 aa).

Residues 1–34 (MAAPSDGFKPRERSGGEQAQDWDALPPKRPRLGA) form a disordered region. A2 is modified (N-acetylalanine). Residues S5 and S14 each carry the phosphoserine modification. Residues T176, G201, G206, and 219-224 (ISNYPL) contribute to the S-adenosyl-L-methionine site.

This sequence belongs to the class IV-like SAM-binding methyltransferase superfamily. RNA methyltransferase NEP1 family. In terms of assembly, homodimer. Part of the small subunit (SSU) processome, composed of more than 70 proteins and the RNA chaperone small nucleolar RNA (snoRNA) U3.

The protein localises to the nucleus. It is found in the nucleolus. It catalyses the reaction pseudouridine(1248) in human 18S rRNA + S-adenosyl-L-methionine = N(1)-methylpseudouridine(1248) in human 18S rRNA + S-adenosyl-L-homocysteine + H(+). Functionally, S-adenosyl-L-methionine-dependent pseudouridine N(1)-methyltransferase that methylates pseudouridine at position 1248 (Psi1248) in 18S rRNA. Involved the biosynthesis of the hypermodified N1-methyl-N3-(3-amino-3-carboxypropyl) pseudouridine (m1acp3-Psi) conserved in eukaryotic 18S rRNA. Is not able to methylate uridine at this position. Also has an essential role in 40S ribosomal subunit biogenesis independent on its methyltransferase activity, facilitating the incorporation of ribosomal protein S19 during the formation of pre-ribosomes. Part of the small subunit (SSU) processome, first precursor of the small eukaryotic ribosomal subunit. During the assembly of the SSU processome in the nucleolus, many ribosome biogenesis factors, an RNA chaperone and ribosomal proteins associate with the nascent pre-rRNA and work in concert to generate RNA folding, modifications, rearrangements and cleavage as well as targeted degradation of pre-ribosomal RNA by the RNA exosome. The sequence is that of Ribosomal RNA small subunit methyltransferase NEP1 from Homo sapiens (Human).